Reading from the N-terminus, the 463-residue chain is uncharacterized protein (463 aa).

12 consecutive transmembrane segments (helical) span residues Asp-21–Thr-40, Ala-50–Val-72, Pro-84–Pro-104, Leu-112–Pro-132, Leu-156–Leu-176, Gly-186–Phe-206, Leu-237–Val-257, Leu-271–Pro-291, Ile-311–Cys-331, Ile-334–Ile-354, Gly-367–Val-387, and Leu-408–Ile-428.

The protein belongs to the sodium:galactoside symporter (TC 2.A.2) family.

The protein resides in the cell membrane. This is an uncharacterized protein from Bacillus subtilis (strain 168).